We begin with the raw amino-acid sequence, 67 residues long: Large ribosomal subunit protein bL35 (67 aa).

The disordered stretch occupies residues 21–50; that stretch reads KVMCGPGNKRHGLINRPQKMKRTNRGPQTM. Over residues 28–44 the composition is skewed to basic residues; the sequence is NKRHGLINRPQKMKRTN.

Belongs to the bacterial ribosomal protein bL35 family.

The chain is Large ribosomal subunit protein bL35 from Gluconobacter oxydans (strain 621H) (Gluconobacter suboxydans).